A 351-amino-acid polypeptide reads, in one-letter code: Adenine deaminase (351 aa).

Residues histidine 20, histidine 22, and histidine 200 each coordinate Zn(2+). Residue glutamate 203 is the Proton donor of the active site. Aspartate 281 contributes to the Zn(2+) binding site. Position 282 (aspartate 282) interacts with substrate.

It belongs to the metallo-dependent hydrolases superfamily. Adenosine and AMP deaminases family. Adenine deaminase type 2 subfamily. It depends on Zn(2+) as a cofactor.

It carries out the reaction adenine + H2O + H(+) = hypoxanthine + NH4(+). Its function is as follows. Catalyzes the hydrolytic deamination of adenine to hypoxanthine. Plays an important role in the purine salvage pathway and in nitrogen catabolism. The protein is Adenine deaminase of Cupriavidus taiwanensis (strain DSM 17343 / BCRC 17206 / CCUG 44338 / CIP 107171 / LMG 19424 / R1) (Ralstonia taiwanensis (strain LMG 19424)).